A 451-amino-acid chain; its full sequence is Target of rapamycin complex 1 subunit tco89 (451 aa).

Residues 1 to 35 form a disordered region; sequence MERPSLSRRTSSSTVSTDGEGVYSRSTKERKRNFI. Residues 7–17 show a composition bias toward low complexity; the sequence is SRRTSSSTVST. Ser-70 is subject to Phosphoserine. 3 disordered regions span residues 122 to 164, 176 to 264, and 362 to 437; these read WDDA…PVTR, INSN…GNSL, and NQNF…DTDY. The span at 129–162 shows a compositional bias: polar residues; that stretch reads NDSTAGNLDSDSALPTPSVTTNEAADSSRASSPV. The segment covering 203–215 has biased composition (low complexity); the sequence is DDSAADASTTKSS. 3 stretches are compositionally biased toward polar residues: residues 228-242, 362-376, and 407-417; these read HSNNREVTQATNQPK, NQNFDSQNAFNTSAA, and QSASLNASMSA. Residues 419–430 are compositionally biased toward basic residues; sequence SHARQRSIHVPK.

Belongs to the TORC subunit TCO89 family. As to quaternary structure, the target of rapamycin complex 1 (TORC1) is composed of at least mip1, pop3/wat1, tco89, toc1 and tor2. Post-translationally, either Thr-10, Ser-11, Ser-12, Ser-13 or Thr-14 and Ser-214 or Ser-215 and Ser-247 or Ser-249 are phosphorylated as well.

It is found in the cytoplasm. Component of TORC1, which regulates multiple cellular processes to control cell growth in response to environmental signals. Tor2 is essential for growth. Nutrient limitation and environmental stress signals cause inactivation of TORC1. Active TORC1 positively controls cell growth and ribosome biogenesis by regulating ribosomal protein gene expression. TORC1 negatively controls G1 cell-cycle arrest, sexual development and amino acid uptake. Represses mating, meiosis and sporulation efficiency by interfering with the functions of the transcription factor ste11 and the meiosis-promoting RNA-binding protein mei2. The sequence is that of Target of rapamycin complex 1 subunit tco89 from Schizosaccharomyces pombe (strain 972 / ATCC 24843) (Fission yeast).